The chain runs to 347 residues: S-adenosylmethionine:tRNA ribosyltransferase-isomerase (347 aa).

The protein belongs to the QueA family. As to quaternary structure, monomer.

It is found in the cytoplasm. It carries out the reaction 7-aminomethyl-7-carbaguanosine(34) in tRNA + S-adenosyl-L-methionine = epoxyqueuosine(34) in tRNA + adenine + L-methionine + 2 H(+). It participates in tRNA modification; tRNA-queuosine biosynthesis. Functionally, transfers and isomerizes the ribose moiety from AdoMet to the 7-aminomethyl group of 7-deazaguanine (preQ1-tRNA) to give epoxyqueuosine (oQ-tRNA). This is S-adenosylmethionine:tRNA ribosyltransferase-isomerase from Pseudomonas aeruginosa (strain LESB58).